Reading from the N-terminus, the 504-residue chain is MDDDLDQFFHDDAEQNADFSDDGSEDEAPDNVDVNYELEREEPKSKSVAEFTKFLQECEYPDDIIKYFKTIKFFEKDAKTGDIVSTKSLKFTVTGFIQYLFGTKRIQRPVLRGIAKIFGRYDIFHLISPELVKSITHLKETRTTAWFNLFNFLSFVPHPTDRVTKPLFRQFCVRTPFNDKSMKKRKLTWISTDYDNVWMAVMNGKISDKLTLKLIPYITQNVISKLKAPFKSADFFFKMFDKTDYHGILSLGAIFRLISEHNFEYPKFYDKVYSLTNPSLLYMSQKESILTLLDSFLSSTHLPTYITASFLKRLSRCLLLAPIDAQEPILGLIRNLVIRHPNCSELVHREVPQTLYDDPFDNDETDLHKTRALESSLWEMKLLQCHWNQSVRKRAHFVDKSIQKIESYVRFRCTDELFSVNMAKSFGGEDGEAEKYRKLQDGDEDEEGTGKPEPKKARRKGFGGKFAPKHEEKVTRAVGVNSEAPKGILDRQVPIIDVPTLWKI.

Residues 431–483 (GEAEKYRKLQDGDEDEEGTGKPEPKKARRKGFGGKFAPKHEEKVTRAVGVNSE) are disordered.

This sequence belongs to the CBF/MAK21 family.

This is an uncharacterized protein from Caenorhabditis elegans.